We begin with the raw amino-acid sequence, 86 residues long: DNA-directed RNA polymerase subunit Rpo11 (86 aa).

This sequence belongs to the archaeal Rpo11/eukaryotic RPB11/RPC19 RNA polymerase subunit family. As to quaternary structure, part of the RNA polymerase complex.

It localises to the cytoplasm. The enzyme catalyses RNA(n) + a ribonucleoside 5'-triphosphate = RNA(n+1) + diphosphate. DNA-dependent RNA polymerase (RNAP) catalyzes the transcription of DNA into RNA using the four ribonucleoside triphosphates as substrates. This Archaeoglobus fulgidus (strain ATCC 49558 / DSM 4304 / JCM 9628 / NBRC 100126 / VC-16) protein is DNA-directed RNA polymerase subunit Rpo11.